Reading from the N-terminus, the 337-residue chain is Biotin synthase (337 aa).

In terms of domain architecture, Radical SAM core spans 58–283 (EDVEVEGIVS…RTVLRYAGGR (226 aa)). The [4Fe-4S] cluster site is built by Cys-73, Cys-77, and Cys-80. [2Fe-2S] cluster contacts are provided by Cys-116, Cys-149, Cys-208, and Arg-278.

Belongs to the radical SAM superfamily. Biotin synthase family. As to quaternary structure, homodimer. It depends on [4Fe-4S] cluster as a cofactor. [2Fe-2S] cluster is required as a cofactor.

It carries out the reaction (4R,5S)-dethiobiotin + (sulfur carrier)-SH + 2 reduced [2Fe-2S]-[ferredoxin] + 2 S-adenosyl-L-methionine = (sulfur carrier)-H + biotin + 2 5'-deoxyadenosine + 2 L-methionine + 2 oxidized [2Fe-2S]-[ferredoxin]. It participates in cofactor biosynthesis; biotin biosynthesis; biotin from 7,8-diaminononanoate: step 2/2. Functionally, catalyzes the conversion of dethiobiotin (DTB) to biotin by the insertion of a sulfur atom into dethiobiotin via a radical-based mechanism. In Pseudarthrobacter chlorophenolicus (strain ATCC 700700 / DSM 12829 / CIP 107037 / JCM 12360 / KCTC 9906 / NCIMB 13794 / A6) (Arthrobacter chlorophenolicus), this protein is Biotin synthase.